We begin with the raw amino-acid sequence, 315 residues long: MNLDYLPFEQPIAELEQKIEELRLVGNDNELNISDEISRLEDKKIALTKSLFSNLGAWEVSQLARHPKRPYTLDYIKHVFTDFEEMHGDRHYADDRAIVGGIARLDGRPVMVIGHQKGREVKEKVLRNFGMPRPEGYRKALRLMETAERFNMPIVTLIDTPGAYPGIGAEERGQSEAIAFNLAVMSRLKTPIISTVIGEGGSGGALAIGVCDELMMLQYGTYSVISPEGCASILWKSADRASDAAKAMGITAQRLQELGFVDTIIQEPLGGAHISHEEMAQSLKKNVLAALDRMEALTTEELLARRYNRLMSYGL.

The CoA carboxyltransferase C-terminal domain occupies 40-293 (LEDKKIALTK…KKNVLAALDR (254 aa)).

The protein belongs to the AccA family. As to quaternary structure, acetyl-CoA carboxylase is a heterohexamer composed of biotin carboxyl carrier protein (AccB), biotin carboxylase (AccC) and two subunits each of ACCase subunit alpha (AccA) and ACCase subunit beta (AccD).

The protein localises to the cytoplasm. The enzyme catalyses N(6)-carboxybiotinyl-L-lysyl-[protein] + acetyl-CoA = N(6)-biotinyl-L-lysyl-[protein] + malonyl-CoA. It participates in lipid metabolism; malonyl-CoA biosynthesis; malonyl-CoA from acetyl-CoA: step 1/1. Component of the acetyl coenzyme A carboxylase (ACC) complex. First, biotin carboxylase catalyzes the carboxylation of biotin on its carrier protein (BCCP) and then the CO(2) group is transferred by the carboxyltransferase to acetyl-CoA to form malonyl-CoA. This Marinomonas sp. (strain MWYL1) protein is Acetyl-coenzyme A carboxylase carboxyl transferase subunit alpha.